Reading from the N-terminus, the 281-residue chain is Large ribosomal subunit protein mL46 (281 aa).

Residues 1-19 constitute a mitochondrion transit peptide; the sequence is MKVNLMLKRGLATATATAS. The segment covering 106-118 has biased composition (basic and acidic residues); that stretch reads RERSTKQEVKLSD. Residues 106–141 form a disordered region; the sequence is RERSTKQEVKLSDDSTVAFSNNQKEQSKDDVNRPVI. Polar residues predominate over residues 119-129; the sequence is DSTVAFSNNQK.

Belongs to the mitochondrion-specific ribosomal protein mL46 family. In terms of assembly, component of the mitochondrial large ribosomal subunit (mt-LSU). Mature yeast 74S mitochondrial ribosomes consist of a small (37S) and a large (54S) subunit. The 37S small subunit contains a 15S ribosomal RNA (15S mt-rRNA) and 34 different proteins. The 54S large subunit contains a 21S rRNA (21S mt-rRNA) and 46 different proteins.

The protein resides in the mitochondrion. Functionally, component of the mitochondrial ribosome (mitoribosome), a dedicated translation machinery responsible for the synthesis of mitochondrial genome-encoded proteins, including at least some of the essential transmembrane subunits of the mitochondrial respiratory chain. The mitoribosomes are attached to the mitochondrial inner membrane and translation products are cotranslationally integrated into the membrane. The chain is Large ribosomal subunit protein mL46 (MRPL17) from Saccharomyces cerevisiae (strain ATCC 204508 / S288c) (Baker's yeast).